A 502-amino-acid chain; its full sequence is Mannitol 2-dehydrogenase (502 aa).

37 to 48 lines the NAD(+) pocket; that stretch reads IVHIGVGGFHRA.

Belongs to the mannitol dehydrogenase family. Monomer.

It catalyses the reaction D-mannitol + NAD(+) = D-fructose + NADH + H(+). Catalyzes the NAD(H)-dependent interconversion of D-fructose and D-mannitol in the mannitol metabolic pathway. This Aspergillus clavatus (strain ATCC 1007 / CBS 513.65 / DSM 816 / NCTC 3887 / NRRL 1 / QM 1276 / 107) protein is Mannitol 2-dehydrogenase.